Reading from the N-terminus, the 420-residue chain is Odorant receptor 63a (420 aa).

At 1–43 (MYSPEEAAELKRRNYRSIREMIRLSYTVGFNLLDPSRCGQVLR) the chain is on the cytoplasmic side. The chain crosses the membrane as a helical span at residues 44-64 (IWTIVLSVSSLASLYGHWQML). Residues 65–76 (ARYIHDIPRIGE) are Extracellular-facing. Residues 77 to 97 (TAGTALQFLTSIAKMWYFLFA) form a helical membrane-spanning segment. Residues 98–150 (HRQIYELLRKARCHELLQKCELFERMSDLPVIKEIRQQVESTMNRYWASTRRQ) are Cytoplasmic-facing. A helical transmembrane segment spans residues 151 to 171 (ILIYLYSCICITTNYFINSFV). Residues 172 to 217 (INLYRYFTKPKGSYDIMLPLPSLYPAWEHKGLEFPYYHIQMYLETC) lie on the Extracellular side of the membrane. Residues 218 to 238 (SLYICGMCAVSFDGVFIVLCL) traverse the membrane as a helical segment. Over 239 to 296 (HSVGLMRSLNQMVEQATSELVPPDRRVEYLRCCIYQYQRVANFATEVNNCFRHITFTQ) the chain is Cytoplasmic. The helical transmembrane segment at 297–317 (FLLSLFNWGLALFQMSVGLGN) threads the bilayer. N-linked (GlcNAc...) asparagine glycosylation is present at asparagine 318. The Extracellular segment spans residues 318–320 (NSS). A helical transmembrane segment spans residues 321 to 341 (ITMIRMTMYLVAAGYQIVVYC). Topologically, residues 342 to 387 (YNGQRFATASEEIANAFYQVRWYGESREFRHLIRMMLMRTNRGFRL) are cytoplasmic. A helical transmembrane segment spans residues 388–408 (DVSWFMQMSLPTLMAMVRTSG). The Extracellular segment spans residues 409 to 420 (QYFLLLQNVNQK).

It belongs to the insect chemoreceptor superfamily. Heteromeric odorant receptor channel (TC 1.A.69) family. Or63a subfamily. Interacts with Orco. Complexes exist early in the endomembrane system in olfactory sensory neurons (OSNs), coupling these complexes to the conserved ciliary trafficking pathway.

The protein localises to the cell membrane. In terms of biological role, odorant receptor which mediates acceptance or avoidance behavior, depending on its substrates. The odorant receptor repertoire encodes a large collection of odor stimuli that vary widely in identity, intensity, and duration. May form a complex with Orco to form odorant-sensing units, providing sensitive and prolonged odorant signaling and calcium permeability. Involved in the behavioral responses to butyl acetate, isoamyl acetate, and hexanoic acid. The chain is Odorant receptor 63a (Or63a) from Drosophila melanogaster (Fruit fly).